The chain runs to 505 residues: RNA-binding region-containing protein 3 (505 aa).

One can recognise an RRM 1 domain in the interval 15–90 (KTLIIRHLPR…RTLVVEFAKD (76 aa)). Disordered stretches follow at residues 96–123 (ILKD…QPSV), 193–236 (PPMF…EEER), 354–374 (AQVP…SEFI), and 486–505 (ARSA…GRKH). The segment covering 193-214 (PPMFEMPSGPLPPPFPPENPPL) has biased composition (pro residues). Acidic residues-rich tracts occupy residues 221–235 (GSEE…DEEE) and 361–370 (EEQEEDEDIP). The 84-residue stretch at 405 to 488 (CRLYVKNVAK…KPLVVQFARS (84 aa)) folds into the RRM 2 domain. Positions 491-505 (PKQESADPKKGGRKH) are enriched in basic and acidic residues.

Component of the U11/U12 snRNPs that are part of the U12-type spliceosome.

The protein localises to the nucleus. In terms of biological role, participates in pre-mRNA U12-dependent splicing, performed by the minor spliceosome which removes U12-type introns. U12-type introns comprise less than 1% of all non-coding sequences. This Danio rerio (Zebrafish) protein is RNA-binding region-containing protein 3.